The primary structure comprises 222 residues: Pectate lyase A (222 aa).

Residues 1-26 (MKKMLTLLLSAGLVASIFGVMPAAAA) form the signal peptide.

It belongs to the polysaccharide lyase 3 family. Ca(2+) is required as a cofactor.

Its subcellular location is the secreted. The catalysed reaction is Eliminative cleavage of (1-&gt;4)-alpha-D-galacturonan to give oligosaccharides with 4-deoxy-alpha-D-galact-4-enuronosyl groups at their non-reducing ends.. It carries out the reaction Eliminative cleavage of (1-&gt;4)-alpha-D-galacturonan methyl ester to give oligosaccharides with 4-deoxy-6-O-methyl-alpha-D-galact-4-enuronosyl groups at their non-reducing ends.. It functions in the pathway glycan metabolism; pectin degradation. In terms of biological role, catalyzes the depolymerization of both polygalacturonate and pectins with low (20-34%) and high (90%) levels of methyl esterification, with an endo mode of action. In contrast to the majority of pectate lyases, displays high activity on highly methylated pectins. Does not show xylanase and cellulase activity. This is Pectate lyase A from Paenibacillus amylolyticus.